The sequence spans 405 residues: BRCA1-A complex subunit Abraxas 1 (405 aa).

An MPN domain is found at 7-154 (LGVLSGFVLG…CTHCLEHGLY (148 aa)). Ser-48 bears the Phosphoserine mark. A coiled-coil region spans residues 208-262 (SLKEVRKINEMYAAIQEELKTICQKVEQSEREVEKLLMDVNRLKEVRKKQQAQAK). Residues 333-405 (ASPAPAAPLS…DTDYPRSPTF (73 aa)) form a disordered region. Phosphoserine is present on residues Ser-382, Ser-383, Ser-392, and Ser-402. Residues 386–397 (IDTEVGSPEDDT) show a composition bias toward acidic residues. Positions 402–405 (SPTF) match the pSXXF motif motif.

Belongs to the FAM175 family. Abraxas subfamily. In terms of assembly, component of the ARISC complex, at least composed of UIMC1/RAP80, ABRAXAS1, BRCC3/BRCC36, BABAM2 and BABAM1/NBA1. Component of the BRCA1-A complex, at least composed of the BRCA1, BARD1, UIMC1/RAP80, ABRAXAS1, BRCC3/BRCC36, BABAM2 and BABAM1/NBA1. In the complex, interacts directly with UIMC1/RAP80, BRCC3/BRCC36 and BABAM2. Homodimer. Interacts directly (when phosphorylated at Ser-402) with BRCA1. The phosphorylated homodimer can interact directly with two BRCA1 chains, giving rise to a heterotetramer. Binds polyubiquitin. Phosphorylation of Ser-402 of the pSXXF motif by ATM or ATR constitutes a specific recognition motif for the BRCT domain of BRCA1.

It is found in the nucleus. Functionally, involved in DNA damage response and double-strand break (DSB) repair. Component of the BRCA1-A complex, acting as a central scaffold protein that assembles the various components of the complex and mediates the recruitment of BRCA1. The BRCA1-A complex specifically recognizes 'Lys-63'-linked ubiquitinated histones H2A and H2AX at DNA lesion sites, leading to target the BRCA1-BARD1 heterodimer to sites of DNA damage at DSBs. This complex also possesses deubiquitinase activity that specifically removes 'Lys-63'-linked ubiquitin on histones H2A and H2AX. The chain is BRCA1-A complex subunit Abraxas 1 from Rattus norvegicus (Rat).